The sequence spans 97 residues: DNA replication protein 1 (97 aa).

Residues 49–78 (IELEKKMTKLEHENKLMKNALYELSRMENN) are a coiled coil.

Belongs to the phi29likevirus DNA replication protein 1 family. As to quaternary structure, homomultimer. Self-associates into large complexes forming long filamentous structures. Interacts (via N-terminus) with the primer terminal protein.

It is found in the host membrane. Its function is as follows. Protein that assembles into highly ordered structures and provides a specific site for viral DNA replication. Probably anchors the viral DNA replisome to the host membrane. In Bacillus subtilis (Bacteriophage PZA), this protein is DNA replication protein 1 (1C).